We begin with the raw amino-acid sequence, 1394 residues long: DNA-directed RNA polymerase subunit beta' (1394 aa).

Residues C71, C73, C86, and C89 each coordinate Zn(2+). Mg(2+) is bound by residues D462, D464, and D466. Residues C810, C884, C891, and C894 each coordinate Zn(2+).

Belongs to the RNA polymerase beta' chain family. As to quaternary structure, the RNAP catalytic core consists of 2 alpha, 1 beta, 1 beta' and 1 omega subunit. When a sigma factor is associated with the core the holoenzyme is formed, which can initiate transcription. Mg(2+) serves as cofactor. Requires Zn(2+) as cofactor.

It catalyses the reaction RNA(n) + a ribonucleoside 5'-triphosphate = RNA(n+1) + diphosphate. In terms of biological role, DNA-dependent RNA polymerase catalyzes the transcription of DNA into RNA using the four ribonucleoside triphosphates as substrates. The polypeptide is DNA-directed RNA polymerase subunit beta' (Caulobacter sp. (strain K31)).